A 137-amino-acid polypeptide reads, in one-letter code: Ribosome-binding factor A (137 aa).

This sequence belongs to the RbfA family. Monomer. Binds 30S ribosomal subunits, but not 50S ribosomal subunits or 70S ribosomes.

It localises to the cytoplasm. One of several proteins that assist in the late maturation steps of the functional core of the 30S ribosomal subunit. Associates with free 30S ribosomal subunits (but not with 30S subunits that are part of 70S ribosomes or polysomes). Required for efficient processing of 16S rRNA. May interact with the 5'-terminal helix region of 16S rRNA. This Cereibacter sphaeroides (strain ATCC 17029 / ATH 2.4.9) (Rhodobacter sphaeroides) protein is Ribosome-binding factor A.